A 1345-amino-acid polypeptide reads, in one-letter code: Membrane-anchored lipid-binding protein LAM4 (1345 aa).

Over 1 to 1197 (MTRDSKKKHH…NFSSEIFMNK (1197 aa)) the chain is Cytoplasmic. Disordered stretches follow at residues 51-80 (RVGG…KAAA), 115-134 (SLKG…PSLS), 139-164 (EKEK…DGHD), 190-302 (DADN…SLDD), 356-397 (LPEA…KPRR), 425-447 (SFNS…PREM), and 489-531 (STII…NGRQ). Threonine 66 bears the Phosphothreonine mark. Positions 216 to 228 (SENSTNNKNTSST) are enriched in low complexity. Residues 246 to 271 (SKSSTPSNQQLNTTEAGSKSKPSSLS) are compositionally biased toward polar residues. The segment covering 283–294 (HSNSHSSSNAIS) has biased composition (low complexity). Positions 425–436 (SFNSSNGLTNND) are enriched in polar residues. Over residues 498-516 (SNGRPSSGLRRSSSKSFSS) the composition is skewed to low complexity. One can recognise a GRAM domain in the interval 549-616 (EFHAIFKDSG…FKTIVQIEKR (68 aa)). Residues 665–677 (SNSNNTNSSSNSI) are compositionally biased toward low complexity. The tract at residues 665-722 (SNSNNTNSSSNSISDDENDDYDDDYDDYGDDDDDLYDNSNNISDSTDMTSSVSIGKPE) is disordered. Residues 678 to 700 (SDDENDDYDDDYDDYGDDDDDLY) are compositionally biased toward acidic residues. Serine 747 carries the post-translational modification Phosphoserine. VASt domains are found at residues 758-930 (NEKL…TRSA) and 967-1139 (DDSI…SRAK). The tract at residues 930–963 (ATKRKRSSKENTVTVSTLPKMEPSSHAPTEPDIQ) is disordered. Over residues 1141-1158 (KKPVKKVMKSHDKHRPFH) the composition is skewed to basic residues. The tract at residues 1141–1172 (KKPVKKVMKSHDKHRPFHSKVEQKSSESRKSD) is disordered. The segment covering 1159-1172 (SKVEQKSSESRKSD) has biased composition (basic and acidic residues). Residues 1198–1218 (LLSPQKLFLILGLTIMLFWSP) traverse the membrane as a helical segment. At 1219-1345 (RLHVFQEKNN…NIERDANDLS (127 aa)) the chain is on the lumenal side.

The protein belongs to the YSP2 family.

The protein localises to the endoplasmic reticulum membrane. Its function is as follows. May be involved in sterol transfer between intracellular membranes. This is Membrane-anchored lipid-binding protein LAM4 from Saccharomyces cerevisiae (strain ATCC 204508 / S288c) (Baker's yeast).